Consider the following 300-residue polypeptide: Pantoate kinase (300 aa).

It belongs to the GHMP kinase family. PoK subfamily. In terms of assembly, homodimer.

The enzyme catalyses (R)-pantoate + ATP = (R)-4-phosphopantoate + ADP + H(+). It participates in cofactor biosynthesis; coenzyme A biosynthesis. Moderately stimulated in the presence of potassium cations. Inhibited by increasing concentrations of pantoate. Activity is not affected by CoA/acetyl-CoA. Functionally, phosphorylates (R)-pantoate to form (R)-4-phosphopantoate in the CoA biosynthesis pathway. Displays broad nucleotide specificity and utilizes ATP, GTP, UTP, and CTP with comparable catalytic efficiencies. This chain is Pantoate kinase, found in Thermococcus kodakarensis (strain ATCC BAA-918 / JCM 12380 / KOD1) (Pyrococcus kodakaraensis (strain KOD1)).